Reading from the N-terminus, the 494-residue chain is Putative myristoylated protein 006R (494 aa).

The N-myristoyl glycine; by host moiety is linked to residue G2. A run of 3 helical transmembrane segments spans residues 193-213 (VAAL…GGIA), 214-234 (VAGR…LVVW), and 465-485 (WLLY…ILAF).

This sequence belongs to the IIV-6 118L/458R family.

Its subcellular location is the membrane. The chain is Putative myristoylated protein 006R from Aedes vexans (Inland floodwater mosquito).